A 441-amino-acid polypeptide reads, in one-letter code: Xaa-Pro dipeptidase (441 aa).

Aspartate 244, aspartate 255, histidine 336, glutamate 381, and glutamate 420 together coordinate Mn(2+).

This sequence belongs to the peptidase M24B family. Bacterial-type prolidase subfamily. It depends on Mn(2+) as a cofactor.

It catalyses the reaction Xaa-L-Pro dipeptide + H2O = an L-alpha-amino acid + L-proline. Functionally, splits dipeptides with a prolyl residue in the C-terminal position. The sequence is that of Xaa-Pro dipeptidase from Xanthomonas euvesicatoria pv. vesicatoria (strain 85-10) (Xanthomonas campestris pv. vesicatoria).